A 163-amino-acid chain; its full sequence is Centrosomal protein of 19 kDa (163 aa).

This sequence belongs to the CEP19 family. As to quaternary structure, interacts with CEP43; this interaction is required for its localization to the mother centriole. Interacts (via residues 121-150) with RABL2B. Interacts (via C-terminus) with CEP350; this interaction is required for its localization to the mother centriole.

The protein resides in the cytoplasm. The protein localises to the cytoskeleton. Its subcellular location is the microtubule organizing center. It localises to the centrosome. It is found in the centriole. The protein resides in the spindle pole. The protein localises to the cilium basal body. Functionally, required for ciliation. Recruits the RABL2B GTPase to the ciliary base to initiate ciliation. After specifically capturing the activated GTP-bound RABL2B, the CEP19-RABL2B complex binds intraflagellar transport (IFT) complex B from the large pool pre-docked at the base of the cilium and thus triggers its entry into the cilia. Involved in the early steps in cilia formation by recruiting the ciliary vesicles (CVs) to the distal end of the mother centriole where they fuse to initiate cilium assembly. Involved in microtubule (MT) anchoring at centrosomes. The chain is Centrosomal protein of 19 kDa (Cep19) from Rattus norvegicus (Rat).